We begin with the raw amino-acid sequence, 229 residues long: Heptaprenylglyceryl phosphate synthase (229 aa).

Lys12 contributes to the sn-glycerol 1-phosphate binding site. The Mg(2+) site is built by Asp14 and Ser40. Sn-glycerol 1-phosphate is bound by residues 159 to 164, Gly189, and 209 to 210; these read YLEYSG and GN.

The protein belongs to the GGGP/HepGP synthase family. Group I subfamily. As to quaternary structure, homodimer. It depends on Mg(2+) as a cofactor.

The enzyme catalyses sn-glycerol 1-phosphate + all-trans-heptaprenyl diphosphate = 3-heptaprenyl-sn-glycero-1-phosphate + diphosphate. Its pathway is membrane lipid metabolism; glycerophospholipid metabolism. Functionally, prenyltransferase that catalyzes in vivo the transfer of the heptaprenyl moiety of heptaprenyl pyrophosphate (HepPP; 35 carbon atoms) to the C3 hydroxyl of sn-glycerol-1-phosphate (G1P), producing heptaprenylglyceryl phosphate (HepGP). This reaction is an ether-bond-formation step in the biosynthesis of archaea-type G1P-based membrane lipids found in Bacillales. This Bacillus cytotoxicus (strain DSM 22905 / CIP 110041 / 391-98 / NVH 391-98) protein is Heptaprenylglyceryl phosphate synthase.